Consider the following 392-residue polypeptide: MASRQLLVAPPEALRKPLCTPHRLLLGPGPSNLPPRVLAAGGLQMIGHMHEEMYQVMDEIKQGIQYAFQTRNALTLAVSGSGHCALETALFNLLEPGDAFLVGANGIWGQRAAEVGERIGARVHPMIKDPGSHYTLQEVEECLAQHKPVLLFLTHGESSTGVLQPLDGFGELCHRYKCLLLVDSVASLGGAPIYMDQQGIDVLYSGSQKALNAPPGTSLISFSDKAKSKIYARKTKPFSFYMDVQLLANIWGCDGKPRMYHHTTPVIGIFALRESLALLVEQGLEKSWQRHREVAQHLYRRLQELGLQLFVKDPALRLPTVTTVIVPASYRWRDIVSYVMHHFGIEITGGLGPSADKVLRIGLLGCNATRENVDRLATALREALQHCAQSQL.

The residue at position 209 (K209) is an N6-(pyridoxal phosphate)lysine. An N6-acetyllysine; alternate modification is found at K225. The residue at position 225 (K225) is an N6-succinyllysine; alternate. 2 positions are modified to N6-acetyllysine: K234 and K312. Residue R360 coordinates substrate. Positions 390–392 match the Microbody targeting signal motif; sequence SQL.

Belongs to the class-V pyridoxal-phosphate-dependent aminotransferase family. Homodimer. Pyridoxal 5'-phosphate serves as cofactor.

The protein resides in the peroxisome. It catalyses the reaction L-serine + pyruvate = 3-hydroxypyruvate + L-alanine. The enzyme catalyses glyoxylate + L-alanine = glycine + pyruvate. Functionally, peroxisomal aminotransferase that catalyzes the transamination of glyoxylate to glycine and contributes to the glyoxylate detoxification. Also catalyzes the transamination between L-serine and pyruvate and contributes to gluconeogenesis from the L-serine metabolism. In Oryctolagus cuniculus (Rabbit), this protein is Alanine--glyoxylate aminotransferase.